The chain runs to 150 residues: Putative flagella-related protein G (150 aa).

A helical transmembrane segment spans residues 9-29 (IILFVSVLIITAAVSGILATS).

This sequence belongs to the archaeal FlaG family.

The protein resides in the cell membrane. It localises to the archaeal flagellum. The sequence is that of Putative flagella-related protein G (flaG) from Methanococcus voltae.